A 105-amino-acid chain; its full sequence is Small ribosomal subunit protein uS10 (105 aa).

It belongs to the universal ribosomal protein uS10 family. In terms of assembly, part of the 30S ribosomal subunit.

Functionally, involved in the binding of tRNA to the ribosomes. The sequence is that of Small ribosomal subunit protein uS10 from Lachnoclostridium phytofermentans (strain ATCC 700394 / DSM 18823 / ISDg) (Clostridium phytofermentans).